The sequence spans 700 residues: Stonustoxin subunit beta (700 aa).

Residues 2-264 are structural MACPF/CDC pore-forming domain; that stretch reads PSDILVVAAL…EAPQLMADSS (263 aa). The tract at residues 265-384 is structural FAT domain; that stretch reads TPILRKVRNT…DILTKAKPKV (120 aa). The thioredoxin (THX) domain stretch occupies residues 385–514; sequence IFNQGVLFKG…PYMPGVESIK (130 aa). A B30.2/SPRY domain is found at 506 to 700; the sequence is YMPGVESIKD…QKVNGQIKLL (195 aa).

The protein belongs to the SNTX/VTX toxin family. As to quaternary structure, heterodimer of alpha and beta subunits; non-covalently linked. Intrachain disulfide bonds may be present in the heterodimer. Post-translationally, not glycosylated. Expressed by the venom gland.

It localises to the secreted. In terms of biological role, this lethal (towards mammals) heterodimer induces hemolytic activities due to its ability to form pores in the cell membrane. The pore may be composed of 10 SNTX-alpha/beta heterodimers. The toxin elicits potent hypotension which is endothelium-dependent and appears to be mediated by the nitric oxide pathway and activation of potassium channels. In addition, it displays edema-inducing activities, increases vascular permeability. It also shows myotoxic activities and interferes irreversibly with neuromuscular function. It also induces irreversible platelet aggregation in rabbit or rat but not in human or mouse whole blood. In addition, it has been observed to increase spontaneous quantal acetylcholine release from isolated frog cutaneous pectoris motor endings. The polypeptide is Stonustoxin subunit beta (Synanceia horrida (Estuarine stonefish)).